The primary structure comprises 341 residues: tRNA N6-adenosine threonylcarbamoyltransferase (341 aa).

Residues H111 and H115 each contribute to the Fe cation site. Substrate is bound by residues 134 to 138 (LVSGG), D167, G180, and N277. D305 serves as a coordination point for Fe cation.

Belongs to the KAE1 / TsaD family. Fe(2+) serves as cofactor.

The protein resides in the cytoplasm. It carries out the reaction L-threonylcarbamoyladenylate + adenosine(37) in tRNA = N(6)-L-threonylcarbamoyladenosine(37) in tRNA + AMP + H(+). Its function is as follows. Required for the formation of a threonylcarbamoyl group on adenosine at position 37 (t(6)A37) in tRNAs that read codons beginning with adenine. Is involved in the transfer of the threonylcarbamoyl moiety of threonylcarbamoyl-AMP (TC-AMP) to the N6 group of A37, together with TsaE and TsaB. TsaD likely plays a direct catalytic role in this reaction. This Chromobacterium violaceum (strain ATCC 12472 / DSM 30191 / JCM 1249 / CCUG 213 / NBRC 12614 / NCIMB 9131 / NCTC 9757 / MK) protein is tRNA N6-adenosine threonylcarbamoyltransferase.